A 750-amino-acid polypeptide reads, in one-letter code: uncharacterized protein (750 aa).

Asn-61, Asn-84, Asn-115, Asn-154, Asn-176, Asn-197, Asn-207, Asn-228, Asn-241, Asn-267, Asn-293, Asn-299, Asn-312, Asn-335, Asn-351, Asn-373, Asn-389, and Asn-519 each carry an N-linked (GlcNAc...) asparagine glycan. Phosphoserine occurs at positions 675 and 678. A Glycyl lysine isopeptide (Lys-Gly) (interchain with G-Cter in ubiquitin) cross-link involves residue Lys-697. 2 stretches are compositionally biased toward polar residues: residues 703–726 and 736–750; these read EITA…SNRT and KDSN…HLVA. A disordered region spans residues 703–750; it reads EITAIDNSSSANNTDVTGSTSNRTELSHPDVTPKDSNGPVNNNAHLVA. Residues Asn-709, Asn-714, and Asn-724 are each glycosylated (N-linked (GlcNAc...) asparagine).

N-glycosylated.

The protein localises to the mitochondrion. This is an uncharacterized protein from Saccharomyces cerevisiae (strain ATCC 204508 / S288c) (Baker's yeast).